We begin with the raw amino-acid sequence, 511 residues long: Coiled-coil domain-containing protein 125 (511 aa).

Residues 1 to 12 (MSKVARSSSESD) are compositionally biased toward polar residues. Residues 1–110 (MSKVARSSSE…TVDSNSELSN (110 aa)) form a disordered region. A compositionally biased stretch (basic and acidic residues) spans 43 to 54 (EFSHRSRKRSDG). The segment covering 83–108 (QDTFPQVSRISNYRRQSSTVDSNSEL) has biased composition (polar residues). Coiled-coil stretches lie at residues 105–243 (NSEL…LEAL) and 293–325 (RMAA…MADA). S504 bears the Phosphoserine mark.

The protein resides in the cytoplasm. Its function is as follows. May be involved in the regulation of cell migration. The protein is Coiled-coil domain-containing protein 125 (CCDC125) of Homo sapiens (Human).